The chain runs to 79 residues: Defensin-like protein 3 (79 aa).

Positions 1 to 29 (MAKFASIITLLFAALVVFAAFEAPTMVEA) are cleaved as a signal peptide. 4 disulfide bridges follow: cysteine 32–cysteine 79, cysteine 43–cysteine 64, cysteine 49–cysteine 73, and cysteine 53–cysteine 75.

This sequence belongs to the DEFL family.

It localises to the secreted. Possesses antifungal activity sensitive to inorganic cations. This Brassica napus (Rape) protein is Defensin-like protein 3 (AFP3).